Here is a 261-residue protein sequence, read N- to C-terminus: uncharacterized protein (261 aa).

One can recognise an N-acetyltransferase domain in the interval 135–261 (LVLKRIDEDI…VTEYTIYYSG (127 aa)).

It belongs to the acetyltransferase family.

This is an uncharacterized protein from Bacillus subtilis (strain 168).